The following is a 216-amino-acid chain: MKQDSRFPNLFILDHPLIQHKLTHMRDKDTSTRTFRELLREITLLMGYEITRNLPITTKRVETPLVEIDAPVIAGKKLAIVPVLRAGVGMSDGLLELIPSARVGHIGVYRANDHRPVEYLVRLPDLEDRIFILCDPMVATGYSAAHAIDVLKRRGVPGERLMFLALVAAPEGVQVFQDAHPDVKLYVASLDSHLDDHAYIVPGLGDAGDRLFGTKN.

Residues R85, R110, and 135–143 each bind 5-phospho-alpha-D-ribose 1-diphosphate; that span reads DPMVATGYS. Uracil is bound by residues I200 and 205-207; that span reads GDA. Residue D206 coordinates 5-phospho-alpha-D-ribose 1-diphosphate.

The protein belongs to the UPRTase family. Mg(2+) serves as cofactor.

The catalysed reaction is UMP + diphosphate = 5-phospho-alpha-D-ribose 1-diphosphate + uracil. Its pathway is pyrimidine metabolism; UMP biosynthesis via salvage pathway; UMP from uracil: step 1/1. Allosterically activated by GTP. Catalyzes the conversion of uracil and 5-phospho-alpha-D-ribose 1-diphosphate (PRPP) to UMP and diphosphate. The chain is Uracil phosphoribosyltransferase from Burkholderia pseudomallei (strain 668).